Here is a 354-residue protein sequence, read N- to C-terminus: Guanine nucleotide-binding protein G(i) subunit alpha-3 (354 aa).

A lipid anchor (N-myristoyl glycine) is attached at glycine 2. Residue cysteine 3 is the site of S-palmitoyl cysteine attachment. One can recognise a G-alpha domain in the interval lysine 32–tyrosine 354. Residues lysine 35–threonine 48 form a G1 motif region. Positions 42, 43, 44, 45, 46, 47, 48, 150, 151, 175, 176, 177, 178, 179, 180, 181, 201, 203, 269, 270, 272, 273, 325, 326, and 327 each coordinate GTP. Serine 47 lines the Mg(2+) pocket. Positions aspartate 173–threonine 181 are G2 motif. Threonine 181 is a binding site for Mg(2+). The segment at phenylalanine 196 to arginine 205 is G3 motif. The segment at isoleucine 265–aspartate 272 is G4 motif. Residues threonine 324–threonine 329 are G5 motif.

The protein belongs to the G-alpha family. G(i/o/t/z) subfamily. As to quaternary structure, heterotrimeric G proteins are composed of 3 units; alpha, beta and gamma. The alpha subunit contains the guanine nucleotide binding site. GTP binding causes dissociation of the heterotrimer, liberating the individual subunits so that they can interact with downstream effector proteins. Forms a complex with CCDC88A/GIV and EGFR which leads to enhanced EGFR signaling and triggering of cell migration; ligand stimulation is required for recruitment of GNAI3 to the complex. Interacts (inactive GDP-bound form) with CCDC88A/GIV (via GBA motif); the interaction leads to activation of GNAI3. Interacts (inactive GDP-bound form) with CCDC88C/DAPLE (via GBA motif); the interaction leads to activation of GNAI3. Interacts (inactive GDP-bound form) with NUCB1 (via GBA motif) and NUCB2 (via GBA motif); the interaction leads to activation of GNAI3. Interacts (inactive GDP-bound form) with PLCD4 (via GBA motif); the interaction leads to activation of GNAI3. Interacts with INSR; the interaction is probably mediated by CCDC88A/GIV. Interacts with GPSM1. Interacts (GDP-bound form) with GPSM2 (via GoLoco domains). Does not interact with RGS2. Interacts with RGS8 and RGS10; this strongly enhances the intrinsic GTPase activity. Interacts with RGS16; this strongly enhances the intrinsic GTPase activity. Interacts with RGS12. Interacts (via active GTP- or inactive GDP-bound form) with RGS14. Interacts (via active GTP-bound form) with TRPC5 (via ANK repeats) in a homotetrameric ion channel; the interaction is direct and activates the channel activity.

The protein resides in the cytoplasm. Its subcellular location is the cell membrane. The protein localises to the cytoskeleton. It is found in the microtubule organizing center. It localises to the centrosome. Functionally, heterotrimeric guanine nucleotide-binding proteins (G proteins) function as transducers downstream of G protein-coupled receptors (GPCRs) in numerous signaling cascades. The alpha chain contains the guanine nucleotide binding site and alternates between an active, GTP-bound state and an inactive, GDP-bound state. Signaling by an activated GPCR promotes GDP release and GTP binding. The alpha subunit has a low GTPase activity that converts bound GTP to GDP, thereby terminating the signal. Both GDP release and GTP hydrolysis are modulated by numerous regulatory proteins. Signaling is mediated via effector proteins, such as adenylate cyclase. Inhibits adenylate cyclase activity, leading to decreased intracellular cAMP levels. Stimulates the activity of receptor-regulated K(+) channels. The active GTP-bound form prevents the association of RGS14 with centrosomes and is required for the translocation of RGS14 from the cytoplasm to the plasma membrane. May play a role in cell division. The active GTP-bound form activates the calcium permeant TRPC5 ion channels. The sequence is that of Guanine nucleotide-binding protein G(i) subunit alpha-3 (GNAI3) from Cricetulus griseus (Chinese hamster).